The primary structure comprises 680 residues: DNA ligase 1 (680 aa).

Residues 35 to 39 (DAEYD), 84 to 85 (SL), and Asp115 contribute to the NAD(+) site. The active-site N6-AMP-lysine intermediate is Lys117. 4 residues coordinate NAD(+): Arg138, Glu175, Lys295, and Lys319. Positions 413, 416, 431, and 436 each coordinate Zn(2+). One can recognise a BRCT domain in the interval 599–680 (REGSQLQGLK…FANLLKGLDR (82 aa)).

Belongs to the NAD-dependent DNA ligase family. LigA subfamily. It depends on Mg(2+) as a cofactor. The cofactor is Mn(2+).

It catalyses the reaction NAD(+) + (deoxyribonucleotide)n-3'-hydroxyl + 5'-phospho-(deoxyribonucleotide)m = (deoxyribonucleotide)n+m + AMP + beta-nicotinamide D-nucleotide.. In terms of biological role, DNA ligase that catalyzes the formation of phosphodiester linkages between 5'-phosphoryl and 3'-hydroxyl groups in double-stranded DNA using NAD as a coenzyme and as the energy source for the reaction. It is essential for DNA replication and repair of damaged DNA. The sequence is that of DNA ligase 1 from Nitratidesulfovibrio vulgaris (strain DP4) (Desulfovibrio vulgaris).